We begin with the raw amino-acid sequence, 2531 residues long: Probable polyketide synthase 26 (2531 aa).

In terms of domain architecture, Ketosynthase family 3 (KS3) spans 10 to 433; the sequence is QEDIAIIGFR…GSNCCLVLTE (424 aa). Catalysis depends on for beta-ketoacyl synthase activity residues cysteine 174, histidine 316, and histidine 356. Residues 620 to 653 form an acyl/malonyl transferase region; sequence GINPSFIVGHSLGELPMAFCSGMIDFDTVCYLLY. Serine 630 acts as the For acyl/malonyl transferase activity in catalysis. An N-terminal hotdog fold region spans residues 915-1036; sequence MDTLGFSNEK…ANYHLSHRDD (122 aa). One can recognise a PKS/mFAS DH domain in the interval 915–1206; sequence MDTLGFSNEK…LKSLIPLKDP (292 aa). Histidine 948 (proton acceptor; for dehydratase activity) is an active-site residue. The segment at 1055–1206 is C-terminal hotdog fold; the sequence is NLTKLSKNQF…LKSLIPLKDP (152 aa). The active-site Proton donor; for dehydratase activity is aspartate 1117. The Carrier domain occupies 2431-2509; that stretch reads ASENPVKDLL…DNIKILTDSY (79 aa). O-(pantetheine 4'-phosphoryl)serine is present on serine 2468.

Pantetheine 4'-phosphate is required as a cofactor.

Probable polyketide synthase. This Dictyostelium discoideum (Social amoeba) protein is Probable polyketide synthase 26 (pks26).